Consider the following 122-residue polypeptide: Large ribosomal subunit protein uL14 (122 aa).

Belongs to the universal ribosomal protein uL14 family. In terms of assembly, part of the 50S ribosomal subunit. Forms a cluster with proteins L3 and L19. In the 70S ribosome, L14 and L19 interact and together make contacts with the 16S rRNA in bridges B5 and B8.

Its function is as follows. Binds to 23S rRNA. Forms part of two intersubunit bridges in the 70S ribosome. The chain is Large ribosomal subunit protein uL14 from Cyanothece sp. (strain PCC 7425 / ATCC 29141).